The chain runs to 340 residues: UPF0284 protein Saci_0020 (340 aa).

This sequence belongs to the UPF0284 family.

The chain is UPF0284 protein Saci_0020 from Sulfolobus acidocaldarius (strain ATCC 33909 / DSM 639 / JCM 8929 / NBRC 15157 / NCIMB 11770).